A 418-amino-acid chain; its full sequence is Tektin-1 (418 aa).

Coiled-coil stretches lie at residues 20–107 (NKSQ…SYKE), 134–177 (QELQ…DLKD), 266–308 (NGLK…QQEG), and 332–383 (VAQY…ENTI).

Belongs to the tektin family. As to quaternary structure, microtubule inner protein component of sperm flagellar doublet microtubules. In terms of processing, ubiquitinated, leading to its degradation. Deubiquitinated by USP16, promoting its stability. As to expression, predominantly expressed in testis.

Its subcellular location is the cytoplasm. The protein resides in the cytoskeleton. It is found in the cilium axoneme. The protein localises to the flagellum axoneme. Its function is as follows. Microtubule inner protein (MIP) part of the dynein-decorated doublet microtubules (DMTs) in cilia and flagellar axoneme. Forms filamentous polymers in the walls of ciliary and flagellar microtubules. This chain is Tektin-1 (Tekt1), found in Rattus norvegicus (Rat).